We begin with the raw amino-acid sequence, 160 residues long: 6,7-dimethyl-8-ribityllumazine synthase (160 aa).

5-amino-6-(D-ribitylamino)uracil is bound by residues Trp31, Ser65 to Glu67, and Cys89 to Val91. Asp94–Thr95 is a (2S)-2-hydroxy-3-oxobutyl phosphate binding site. His97 serves as the catalytic Proton donor. Phe122 lines the 5-amino-6-(D-ribitylamino)uracil pocket. Arg136 serves as a coordination point for (2S)-2-hydroxy-3-oxobutyl phosphate.

Belongs to the DMRL synthase family.

The enzyme catalyses (2S)-2-hydroxy-3-oxobutyl phosphate + 5-amino-6-(D-ribitylamino)uracil = 6,7-dimethyl-8-(1-D-ribityl)lumazine + phosphate + 2 H2O + H(+). Its pathway is cofactor biosynthesis; riboflavin biosynthesis; riboflavin from 2-hydroxy-3-oxobutyl phosphate and 5-amino-6-(D-ribitylamino)uracil: step 1/2. Catalyzes the formation of 6,7-dimethyl-8-ribityllumazine by condensation of 5-amino-6-(D-ribitylamino)uracil with 3,4-dihydroxy-2-butanone 4-phosphate. This is the penultimate step in the biosynthesis of riboflavin. The sequence is that of 6,7-dimethyl-8-ribityllumazine synthase from Parabacteroides distasonis (strain ATCC 8503 / DSM 20701 / CIP 104284 / JCM 5825 / NCTC 11152).